A 132-amino-acid polypeptide reads, in one-letter code: Small ribosomal subunit protein uS8 (132 aa).

The protein belongs to the universal ribosomal protein uS8 family. Part of the 30S ribosomal subunit. Contacts proteins S5 and S12.

One of the primary rRNA binding proteins, it binds directly to 16S rRNA central domain where it helps coordinate assembly of the platform of the 30S subunit. This chain is Small ribosomal subunit protein uS8, found in Lactobacillus acidophilus (strain ATCC 700396 / NCK56 / N2 / NCFM).